The following is a 196-amino-acid chain: NAD(P)H-quinone oxidoreductase subunit I (196 aa).

4Fe-4S ferredoxin-type domains are found at residues 54–83 (GRIHFEFDKCIACEVCVRVCPINLPVVDWV) and 94–123 (KHYSIDFGVCIFCANCVEYCPTNCLSVTEE). [4Fe-4S] cluster-binding residues include cysteine 63, cysteine 66, cysteine 69, cysteine 73, cysteine 103, cysteine 106, cysteine 109, and cysteine 113. Residues 174 to 196 (PAGAQRAGERPEAIANTAKSSEN) are disordered.

Belongs to the complex I 23 kDa subunit family. NDH-1 is composed of at least 11 different subunits. The cofactor is [4Fe-4S] cluster.

It is found in the cellular thylakoid membrane. It carries out the reaction a plastoquinone + NADH + (n+1) H(+)(in) = a plastoquinol + NAD(+) + n H(+)(out). The enzyme catalyses a plastoquinone + NADPH + (n+1) H(+)(in) = a plastoquinol + NADP(+) + n H(+)(out). Functionally, NDH-1 shuttles electrons from an unknown electron donor, via FMN and iron-sulfur (Fe-S) centers, to quinones in the respiratory and/or the photosynthetic chain. The immediate electron acceptor for the enzyme in this species is believed to be plastoquinone. Couples the redox reaction to proton translocation, and thus conserves the redox energy in a proton gradient. This chain is NAD(P)H-quinone oxidoreductase subunit I, found in Thermosynechococcus vestitus (strain NIES-2133 / IAM M-273 / BP-1).